The primary structure comprises 59 residues: Large ribosomal subunit protein bL32 (59 aa).

The segment at 1–25 (MAVQQNKKSPSKRGMHRSHDFLNAA) is disordered.

This sequence belongs to the bacterial ribosomal protein bL32 family.

In Paraburkholderia phymatum (strain DSM 17167 / CIP 108236 / LMG 21445 / STM815) (Burkholderia phymatum), this protein is Large ribosomal subunit protein bL32.